The following is a 120-amino-acid chain: Large ribosomal subunit protein bL19c (120 aa).

It belongs to the bacterial ribosomal protein bL19 family.

The protein localises to the plastid. It is found in the chloroplast. The sequence is that of Large ribosomal subunit protein bL19c (rpl19) from Trieres chinensis (Marine centric diatom).